A 139-amino-acid chain; its full sequence is Peptide methionine sulfoxide reductase MsrB (139 aa).

Residues Thr9 to Asp131 enclose the MsrB domain. Cys48, Cys51, Cys97, and Cys100 together coordinate Zn(2+). Cys120 functions as the Nucleophile in the catalytic mechanism.

Belongs to the MsrB Met sulfoxide reductase family. It depends on Zn(2+) as a cofactor.

The catalysed reaction is L-methionyl-[protein] + [thioredoxin]-disulfide + H2O = L-methionyl-(R)-S-oxide-[protein] + [thioredoxin]-dithiol. The protein is Peptide methionine sulfoxide reductase MsrB of Pectobacterium atrosepticum (strain SCRI 1043 / ATCC BAA-672) (Erwinia carotovora subsp. atroseptica).